The sequence spans 287 residues: MLGIRKNIRISVNFLQRRTITVKQKLGKNRPLPGWDPNSEYFRPGPTMLNRLQEHLHDTILPDVLAASYRHDIDTALSTDEHTQKDRLPRWIGDNPYYKNRPPQKMRGNKPLLPVKESVNPKNLPSISKVVVSTMHKEALVDKTQLLSTMMAFRSITGLQPEIVYARKDVSPWKLRSGVPVGVKVTLTGESMYTFLSILSELVLPQLHDFKGLSPTSGDQTGNISFGLPSEVMPLFPQIEAVYEMYPHSLPGFNVNITTNSKDTRLARFFVSSLIPFTDGNKEGYVG.

Residues 1 to 18 constitute a mitochondrion transit peptide; that stretch reads MLGIRKNIRISVNFLQRR. A compositionally biased stretch (basic and acidic residues) spans 80 to 89; it reads DEHTQKDRLP. The segment at 80–109 is disordered; the sequence is DEHTQKDRLPRWIGDNPYYKNRPPQKMRGN.

The protein belongs to the universal ribosomal protein uL5 family. In terms of assembly, component of the mitochondrial large ribosomal subunit (mt-LSU). Mature yeast 74S mitochondrial ribosomes consist of a small (37S) and a large (54S) subunit. The 37S small subunit contains a 15S ribosomal RNA (15S mt-rRNA) and at least 32 different proteins. The 54S large subunit contains a 21S rRNA (21S mt-rRNA) and at least 45 different proteins. Unlike bacterial L5, uL5m does not bind zinc.

It localises to the mitochondrion. Component of the mitochondrial ribosome (mitoribosome), a dedicated translation machinery responsible for the synthesis of mitochondrial genome-encoded proteins, including at least some of the essential transmembrane subunits of the mitochondrial respiratory chain. The mitoribosomes are attached to the mitochondrial inner membrane and translation products are cotranslationally integrated into the membrane. The polypeptide is Large ribosomal subunit protein uL5m (mrpl7) (Schizosaccharomyces pombe (strain 972 / ATCC 24843) (Fission yeast)).